Consider the following 425-residue polypeptide: Serine--tRNA ligase 2 (425 aa).

230-232 (TAE) contributes to the L-serine binding site. 261–263 (REE) provides a ligand contact to ATP. Residue glutamate 284 coordinates L-serine. An ATP-binding site is contributed by 348-351 (EISS). Serine 383 lines the L-serine pocket.

It belongs to the class-II aminoacyl-tRNA synthetase family. Type-1 seryl-tRNA synthetase subfamily. As to quaternary structure, homodimer. The tRNA molecule binds across the dimer.

The protein resides in the cytoplasm. It catalyses the reaction tRNA(Ser) + L-serine + ATP = L-seryl-tRNA(Ser) + AMP + diphosphate + H(+). The catalysed reaction is tRNA(Sec) + L-serine + ATP = L-seryl-tRNA(Sec) + AMP + diphosphate + H(+). Its pathway is aminoacyl-tRNA biosynthesis; selenocysteinyl-tRNA(Sec) biosynthesis; L-seryl-tRNA(Sec) from L-serine and tRNA(Sec): step 1/1. Catalyzes the attachment of serine to tRNA(Ser). Is also able to aminoacylate tRNA(Sec) with serine, to form the misacylated tRNA L-seryl-tRNA(Sec), which will be further converted into selenocysteinyl-tRNA(Sec). In Lactiplantibacillus plantarum (strain ATCC BAA-793 / NCIMB 8826 / WCFS1) (Lactobacillus plantarum), this protein is Serine--tRNA ligase 2.